Consider the following 500-residue polypeptide: NAD(P)H-quinone oxidoreductase subunit 2 B, chloroplastic (500 aa).

The next 13 membrane-spanning stretches (helical) occupy residues 14-34, 41-61, 78-98, 116-136, 166-186, 211-231, 242-262, 277-297, 305-325, 335-355, 376-396, 409-429, and 467-487; these read SILP…IDLT, WLYF…LFQL, FNGI…PLSM, LTAT…IIFI, LLMG…LYGL, ISIV…LVPF, APTS…LALA, WHLI…FIAI, MLAY…IAGD, YMLF…LFGL, ASFL…AGFF, GLYL…YYYL, and IIIC…VIAI.

This sequence belongs to the complex I subunit 2 family. In terms of assembly, NDH is composed of at least 16 different subunits, 5 of which are encoded in the nucleus.

It localises to the plastid. The protein resides in the chloroplast thylakoid membrane. It carries out the reaction a plastoquinone + NADH + (n+1) H(+)(in) = a plastoquinol + NAD(+) + n H(+)(out). The enzyme catalyses a plastoquinone + NADPH + (n+1) H(+)(in) = a plastoquinol + NADP(+) + n H(+)(out). Functionally, NDH shuttles electrons from NAD(P)H:plastoquinone, via FMN and iron-sulfur (Fe-S) centers, to quinones in the photosynthetic chain and possibly in a chloroplast respiratory chain. The immediate electron acceptor for the enzyme in this species is believed to be plastoquinone. Couples the redox reaction to proton translocation, and thus conserves the redox energy in a proton gradient. The polypeptide is NAD(P)H-quinone oxidoreductase subunit 2 B, chloroplastic (Anthoceros angustus (Hornwort)).